The chain runs to 435 residues: Exodeoxyribonuclease 7 large subunit (435 aa).

The span at methionine 1 to alanine 10 shows a compositional bias: polar residues. Disordered regions lie at residues methionine 1–threonine 21 and alanine 413–lysine 435.

It belongs to the XseA family. As to quaternary structure, heterooligomer composed of large and small subunits.

The protein localises to the cytoplasm. It catalyses the reaction Exonucleolytic cleavage in either 5'- to 3'- or 3'- to 5'-direction to yield nucleoside 5'-phosphates.. Its function is as follows. Bidirectionally degrades single-stranded DNA into large acid-insoluble oligonucleotides, which are then degraded further into small acid-soluble oligonucleotides. This Leifsonia xyli subsp. xyli (strain CTCB07) protein is Exodeoxyribonuclease 7 large subunit.